A 432-amino-acid polypeptide reads, in one-letter code: MGKNVVVLGTQWGDEGKGKVVDLLTERAKYVVRYQGGHNAGHTLVINGEKTVLHLIPSGILRENVVSIIGNGVVLAPDALMKEMTELEARGVPVRERLLLSEACPLILPYHVALDNAREKARGAKAIGTTGRGIGPAYEDKVARRGLRVGDLFDKETFAVKLKEIVEYHNFQLVNYYKVDAVDYQKVLDDVLAIADILTAMVVDVSDLLYKAHLRGDFVMFEGAQGTLLDIDHGTYPYVTSSNTTAGGVATGSGLGPRYVDYVLGIVKAYSTRVGAGPFPTELFEEVGEHLSQKGNEFGATTGRRRRTGWLDAVAVRRAVQINSLSGFCLTKLDVLDGLKEIKICVGYRLPNGTEVDTTPLAAEGWEGLEPIYETVPGWSESTFGVKDHSKLPQAALNYIKRIEEITGVPIDIISTGPDRSETMVLRDPFDA.

GTP is bound by residues 13 to 19 (GDEGKGK) and 41 to 43 (GHT). Asp14 acts as the Proton acceptor in catalysis. Asp14 and Gly41 together coordinate Mg(2+). IMP-binding positions include 14–17 (DEGK), 39–42 (NAGH), Thr130, Arg144, Gln225, Thr240, and Arg304. His42 functions as the Proton donor in the catalytic mechanism. Residue 300 to 306 (ATTGRRR) coordinates substrate. Residues Arg306, 332–334 (KLD), and 415–417 (STG) each bind GTP.

Belongs to the adenylosuccinate synthetase family. Homodimer. Requires Mg(2+) as cofactor.

It is found in the cytoplasm. It catalyses the reaction IMP + L-aspartate + GTP = N(6)-(1,2-dicarboxyethyl)-AMP + GDP + phosphate + 2 H(+). The protein operates within purine metabolism; AMP biosynthesis via de novo pathway; AMP from IMP: step 1/2. Functionally, plays an important role in the de novo pathway of purine nucleotide biosynthesis. Catalyzes the first committed step in the biosynthesis of AMP from IMP. The polypeptide is Adenylosuccinate synthetase (Pectobacterium atrosepticum (strain SCRI 1043 / ATCC BAA-672) (Erwinia carotovora subsp. atroseptica)).